The primary structure comprises 174 residues: FMN reductase (NADH) RutF (174 aa).

This sequence belongs to the non-flavoprotein flavin reductase family. RutF subfamily.

It catalyses the reaction FMNH2 + NAD(+) = FMN + NADH + 2 H(+). Its function is as follows. Catalyzes the reduction of FMN to FMNH2 which is used to reduce pyrimidine by RutA via the Rut pathway. The sequence is that of FMN reductase (NADH) RutF from Stutzerimonas stutzeri (strain A1501) (Pseudomonas stutzeri).